Reading from the N-terminus, the 472-residue chain is 7-dimethylallyltryptophan synthase hasE (472 aa).

Position 138 (Glu138) interacts with L-tryptophan. The dimethylallyl diphosphate site is built by Arg154, Lys239, Tyr241, Lys313, Tyr315, Tyr393, Tyr460, and Tyr464.

It belongs to the tryptophan dimethylallyltransferase family. In terms of assembly, homodimer.

It carries out the reaction L-tryptophan + dimethylallyl diphosphate = 7-(3-methylbut-2-enyl)-L-tryptophan + diphosphate. It catalyses the reaction an N-terminal L-tryptophanyl-L-alpha-aminoacyl-[peptide] + H2O = an N-terminal L-alpha-aminoacyl-[peptide] + L-tryptophan. It functions in the pathway secondary metabolite biosynthesis. Its function is as follows. 7-dimethylallyltryptophan synthase; part of the gene cluster that mediates the biosynthesis of hexadehydro-astechrome (HAS), a tryptophan-derived iron(III)-complex that acts as a virulence factor in infected mice. Catalyzes the prenylation of L-tryptophan at the C-7 position of the indole moiety. The enzyme is specific for dimethylallyl diphosphate (DMAPP) as prenyl donor. Also accepts D-tryptophan, typtophan-derivatives with modifications at the side chain or the indole ring, and linear and cyclic dipeptides such as H-L-Trp-L-Gly-OH or cyclo-L-Trp-L-Gly as substrates, however with lower efficiency. Also has tryptophan aminopeptidase activity towards linear peptides with a tryptophanyl moiety at the N-terminus. Dipeptides are better substrates than peptides with 3 or more amino acids. Enzymatic rate constants however are much higher for the prenyltransferase activity than for the aminopeptidase activity. Within the hexadehydro-astechrome biosyntetic pathway, hasE catalyzes the prenylation of the hasD-tethered tryptophan or the resulting tethered Trp-Ala dipeptid. The HAS biosynthesis begins with the synthesis of a tethered Trp-Ala dipeptide by the NRPS hasD. The 7-dimethylallyltryptophan synthase hasE then catalyzes the prenylation of the hasD-tethered tryptophan or the resulting tethered Trp-Ala dipeptide at the C-7 position of the indole moiety. HAS biosynthesis continues via tethered intermediates with the succesive actions of the cytochrome P450 monooxygenase hasH, the O-methyltransferase hasC, and the FAD-linked oxidoreductase hasG. The resulting O-methylated diketopiperazine is then released from hasD. Finally, three O-methylated diketopiperazine molecules assemble in a trimeric complex with Fe(III) to produce hexadehydro-astechrome. This Aspergillus fumigatus (strain CBS 144.89 / FGSC A1163 / CEA10) (Neosartorya fumigata) protein is 7-dimethylallyltryptophan synthase hasE.